The sequence spans 348 residues: Ion-translocating oxidoreductase complex subunit D (348 aa).

The next 3 membrane-spanning stretches (helical) occupy residues 20–39, 67–87, and 124–144; these read VMRL…CYLF, YVVS…LIAV, and AMVG…NWMA. Thr187 carries the FMN phosphoryl threonine modification. 4 helical membrane-spanning segments follow: residues 221–241, 244–264, 266–286, and 300–320; these read WINL…LIPW, PVAM…LAPA, FAMP…FFII, and LVFG…GGYP.

This sequence belongs to the NqrB/RnfD family. The complex is composed of six subunits: RnfA, RnfB, RnfC, RnfD, RnfE and RnfG. FMN is required as a cofactor.

It localises to the cell inner membrane. Part of a membrane-bound complex that couples electron transfer with translocation of ions across the membrane. This is Ion-translocating oxidoreductase complex subunit D from Tolumonas auensis (strain DSM 9187 / NBRC 110442 / TA 4).